The chain runs to 719 residues: Pesticidal crystal protein Cry1Id (719 aa).

It belongs to the delta endotoxin family.

Promotes colloidosmotic lysis by binding to the midgut epithelial cells of many lepidopteran larvae. Active on Plutella xylostella and on Bombyx mori. This chain is Pesticidal crystal protein Cry1Id (cry1Id), found in Bacillus thuringiensis.